A 651-amino-acid polypeptide reads, in one-letter code: p-hydroxybenzoic acid efflux pump subunit AaeB (651 aa).

The next 11 helical transmembrane spans lie at 11–31 (FACKLSLAVVLSLVLGFWFEM), 41–61 (AAIVAAGPAFVAGGDPFSGAI), 65–85 (GLLRILGTFIGCFGALVIIMT), 91–111 (VVMLMLCCLWAGVCVWISSLV), 117–137 (YVFALAGYTALIIIITSQSSP), 150–170 (EIILGIVCVILADLVFSPRSV), 367–387 (LFWLLTGWTSGSVCMVMLGVV), 404–424 (FLIGTLIALPLGAVMFMLVLP), 428–448 (QSLLLLGLCIGVMTFVIGIEI), 454–474 (GSLGALASTINILVLDNPMTF), and 480–500 (LDNAIGQIIGCVLALAVIMLI).

It belongs to the aromatic acid exporter ArAE (TC 2.A.85) family.

It is found in the cell inner membrane. Its function is as follows. Forms an efflux pump with AaeA. Could function as a metabolic relief valve, allowing to eliminate certain compounds when they accumulate to high levels in the cell. This chain is p-hydroxybenzoic acid efflux pump subunit AaeB, found in Musicola paradisiaca (strain Ech703) (Dickeya paradisiaca).